We begin with the raw amino-acid sequence, 111 residues long: Ribonuclease P protein component (111 aa).

Belongs to the RnpA family. Consists of a catalytic RNA component (M1 or rnpB) and a protein subunit.

It catalyses the reaction Endonucleolytic cleavage of RNA, removing 5'-extranucleotides from tRNA precursor.. In terms of biological role, RNaseP catalyzes the removal of the 5'-leader sequence from pre-tRNA to produce the mature 5'-terminus. It can also cleave other RNA substrates such as 4.5S RNA. The protein component plays an auxiliary but essential role in vivo by binding to the 5'-leader sequence and broadening the substrate specificity of the ribozyme. The chain is Ribonuclease P protein component from Borrelia garinii subsp. bavariensis (strain ATCC BAA-2496 / DSM 23469 / PBi) (Borreliella bavariensis).